A 92-amino-acid polypeptide reads, in one-letter code: Small ribosomal subunit protein uS19c (92 aa).

It belongs to the universal ribosomal protein uS19 family.

The protein localises to the plastid. It localises to the chloroplast. In terms of biological role, protein S19 forms a complex with S13 that binds strongly to the 16S ribosomal RNA. This chain is Small ribosomal subunit protein uS19c, found in Huperzia lucidula (Shining clubmoss).